Reading from the N-terminus, the 485-residue chain is Protein DETOXIFICATION 8 (485 aa).

The disordered stretch occupies residues 1–26 (MENGFSLVPKEEEEEEDYSNEKSEDQ). 12 helical membrane passes run 41–61 (FMAAPMVAVAASQYLLQVISI), 74–94 (AVAIATSLTNVTGFSLIFGLA), 118–138 (YGSMLCLLLVCFPISLLWVFM), 159–179 (SIWLIPALFGYSVLQSMTRFF), 188–208 (LFLSSLGALFFHVPFSWLLVY), 212–232 (FGIVGAALSIGFSYWLNVGLL), 263–283 (LAIPTAMMTCLEWWSFELLIL), 297–317 (VLSICLTMSSLHYVIVNAIGA), 338–358 (AANSAIFLGMIDAAIVSISLY), 381–401 (ITPFLCLSIGVDSFLAVLSGV), 414–434 (ANIGSYYLVGIPVGSILCFVV), and 442–462 (WIGILVGSTLQTIVLALVTFF).

The protein belongs to the multi antimicrobial extrusion (MATE) (TC 2.A.66.1) family.

The protein resides in the membrane. This is Protein DETOXIFICATION 8 from Arabidopsis thaliana (Mouse-ear cress).